The sequence spans 107 residues: Nucleoid-associated protein RC1337 (107 aa).

It belongs to the YbaB/EbfC family. As to quaternary structure, homodimer.

The protein resides in the cytoplasm. It localises to the nucleoid. In terms of biological role, binds to DNA and alters its conformation. May be involved in regulation of gene expression, nucleoid organization and DNA protection. This Rickettsia conorii (strain ATCC VR-613 / Malish 7) protein is Nucleoid-associated protein RC1337.